The primary structure comprises 113 residues: Cell cycle protein GpsB (113 aa).

Residues 37 to 63 are a coiled coil; that stretch reads KDYETYATLVKSLRQEIADLKEELTRK. The tract at residues 61–82 is disordered; sequence TRKPQVSSAPSPSHPDPIDVAA.

Belongs to the GpsB family. As to quaternary structure, forms polymers through the coiled coil domains. Interacts with PBP1, MreC and EzrA.

The protein localises to the cytoplasm. Its function is as follows. Divisome component that associates with the complex late in its assembly, after the Z-ring is formed, and is dependent on DivIC and PBP2B for its recruitment to the divisome. Together with EzrA, is a key component of the system that regulates PBP1 localization during cell cycle progression. Its main role could be the removal of PBP1 from the cell pole after pole maturation is completed. Also contributes to the recruitment of PBP1 to the division complex. Not essential for septum formation. This Streptococcus pneumoniae (strain ATCC 700669 / Spain 23F-1) protein is Cell cycle protein GpsB.